A 275-amino-acid chain; its full sequence is Large ribosomal subunit protein uL2 (275 aa).

The tract at residues 224 to 275 (VMNPVDHPHGGGEGKSPIGRPSPVTPWGKPTLGYKTRKKNKASDKFIIKRRK) is disordered. Positions 264–275 (KASDKFIIKRRK) are enriched in basic and acidic residues.

Belongs to the universal ribosomal protein uL2 family. In terms of assembly, part of the 50S ribosomal subunit. Forms a bridge to the 30S subunit in the 70S ribosome.

Functionally, one of the primary rRNA binding proteins. Required for association of the 30S and 50S subunits to form the 70S ribosome, for tRNA binding and peptide bond formation. It has been suggested to have peptidyltransferase activity; this is somewhat controversial. Makes several contacts with the 16S rRNA in the 70S ribosome. The protein is Large ribosomal subunit protein uL2 of Acetivibrio thermocellus (strain ATCC 27405 / DSM 1237 / JCM 9322 / NBRC 103400 / NCIMB 10682 / NRRL B-4536 / VPI 7372) (Clostridium thermocellum).